The chain runs to 186 residues: UPF0301 protein Swoo_1337 (186 aa).

It belongs to the UPF0301 (AlgH) family.

This is UPF0301 protein Swoo_1337 from Shewanella woodyi (strain ATCC 51908 / MS32).